A 414-amino-acid chain; its full sequence is Serine hydroxymethyltransferase (414 aa).

Residues Leu-121 and 125–127 (GHL) each bind (6S)-5,6,7,8-tetrahydrofolate. At Lys-229 the chain carries N6-(pyridoxal phosphate)lysine.

Belongs to the SHMT family. As to quaternary structure, homodimer. Pyridoxal 5'-phosphate is required as a cofactor.

It localises to the cytoplasm. It catalyses the reaction (6R)-5,10-methylene-5,6,7,8-tetrahydrofolate + glycine + H2O = (6S)-5,6,7,8-tetrahydrofolate + L-serine. It participates in one-carbon metabolism; tetrahydrofolate interconversion. Its pathway is amino-acid biosynthesis; glycine biosynthesis; glycine from L-serine: step 1/1. In terms of biological role, catalyzes the reversible interconversion of serine and glycine with tetrahydrofolate (THF) serving as the one-carbon carrier. This reaction serves as the major source of one-carbon groups required for the biosynthesis of purines, thymidylate, methionine, and other important biomolecules. Also exhibits THF-independent aldolase activity toward beta-hydroxyamino acids, producing glycine and aldehydes, via a retro-aldol mechanism. The chain is Serine hydroxymethyltransferase from Paracidovorax citrulli (strain AAC00-1) (Acidovorax citrulli).